A 264-amino-acid polypeptide reads, in one-letter code: Leukocyte receptor cluster member 1 (264 aa).

2 disordered regions span residues 1 to 37 and 49 to 76; these read MNILPKKSWHVRNKDNVARVRRDEAQAREEEKERERR and FLRKKARHQNSLPELEAAEAGAPGSGPV. Residues 12–37 show a composition bias toward basic and acidic residues; the sequence is RNKDNVARVRRDEAQAREEEKERERR. The stretch at 16 to 46 forms a coiled coil; that stretch reads NVARVRRDEAQAREEEKERERRVLLAQQEAR. At serine 59 the chain carries Phosphoserine. Low complexity predominate over residues 59 to 75; it reads SLPELEAAEAGAPGSGP. The stretch at 89-115 forms a coiled coil; it reads VIRGNKEYKEEKRQEKERQEKALGILT. Residues 118-264 form a disordered region; that stretch reads GQSAAEAQTQ…PRQQDPHLTH (147 aa). Basic and acidic residues-rich tracts occupy residues 146–162 and 170–214; these read PDEKIKSRLDPLREMQK and HGGD…RSRA. Residues 196 to 222 are a coiled coil; that stretch reads LDQLRAERLRREAAERSRAEALLARVQ. Phosphoserine is present on serine 245.

The chain is Leukocyte receptor cluster member 1 (LENG1) from Homo sapiens (Human).